Consider the following 259-residue polypeptide: MKYKIFASTTPQTEPVLQKLKQVLKGCEAVEKGFDYLFVLGGDGFFVSTVANYNCHNCRVVGINTGHLGFYTSFNEKDLDDNFLQKLQQCHFQRISLLEVSVNGQQHLVLNELAVYTNTAYPINIFIDGEAWEFYRGSGLLIGPRTGSTALAKSAKGAVIFPGIDVLQIIEMNPLLHPNQVTIQSPIILPKETQVEFVVKKAFNPQQFPTFYCDGRKLELPNADTTLALKLVQSTPMFNISLKTQDFINKLKSTFIKQS.

Aspartate 43 acts as the Proton acceptor in catalysis. Residues 43 to 44, 111 to 112, and arginine 136 contribute to the NAD(+) site; these read DG and NE.

It belongs to the NAD kinase family. It depends on a divalent metal cation as a cofactor.

The protein resides in the cytoplasm. The catalysed reaction is NAD(+) + ATP = ADP + NADP(+) + H(+). Functionally, involved in the regulation of the intracellular balance of NAD and NADP, and is a key enzyme in the biosynthesis of NADP. Catalyzes specifically the phosphorylation on 2'-hydroxyl of the adenosine moiety of NAD to yield NADP. This chain is NAD kinase, found in Mycoplasma pneumoniae (strain ATCC 29342 / M129 / Subtype 1) (Mycoplasmoides pneumoniae).